A 443-amino-acid polypeptide reads, in one-letter code: Ribulose bisphosphate carboxylase large chain (443 aa).

Substrate contacts are provided by asparagine 89 and threonine 139. Lysine 141 serves as the catalytic Proton acceptor. Residue lysine 143 coordinates substrate. Mg(2+) contacts are provided by lysine 167, aspartate 169, and glutamate 170. Lysine 167 bears the N6-carboxylysine mark. The active-site Proton acceptor is histidine 260. Residues arginine 261, histidine 293, and serine 345 each contribute to the substrate site.

Belongs to the RuBisCO large chain family. Type I subfamily. As to quaternary structure, heterohexadecamer of 8 large chains and 8 small chains; disulfide-linked. The disulfide link is formed within the large subunit homodimers. Mg(2+) is required as a cofactor. Post-translationally, the disulfide bond which can form in the large chain dimeric partners within the hexadecamer appears to be associated with oxidative stress and protein turnover.

It localises to the plastid. Its subcellular location is the chloroplast. It carries out the reaction 2 (2R)-3-phosphoglycerate + 2 H(+) = D-ribulose 1,5-bisphosphate + CO2 + H2O. It catalyses the reaction D-ribulose 1,5-bisphosphate + O2 = 2-phosphoglycolate + (2R)-3-phosphoglycerate + 2 H(+). In terms of biological role, ruBisCO catalyzes two reactions: the carboxylation of D-ribulose 1,5-bisphosphate, the primary event in carbon dioxide fixation, as well as the oxidative fragmentation of the pentose substrate in the photorespiration process. Both reactions occur simultaneously and in competition at the same active site. The chain is Ribulose bisphosphate carboxylase large chain from Verbena bonariensis (Argentinian vervain).